A 61-amino-acid chain; its full sequence is Protein SspF (61 aa).

This sequence belongs to the alpha/beta-type SASP family.

In terms of biological role, may play some important role in either sporulation or the dormant spore. The sequence is that of Protein SspF (sspF) from Bacillus subtilis (strain 168).